Consider the following 481-residue polypeptide: Proline--tRNA ligase (481 aa).

Belongs to the class-II aminoacyl-tRNA synthetase family. ProS type 3 subfamily. As to quaternary structure, homodimer.

It localises to the cytoplasm. The catalysed reaction is tRNA(Pro) + L-proline + ATP = L-prolyl-tRNA(Pro) + AMP + diphosphate. Functionally, catalyzes the attachment of proline to tRNA(Pro) in a two-step reaction: proline is first activated by ATP to form Pro-AMP and then transferred to the acceptor end of tRNA(Pro). This Chlorobium phaeobacteroides (strain DSM 266 / SMG 266 / 2430) protein is Proline--tRNA ligase.